Reading from the N-terminus, the 179-residue chain is ATP synthase subunit delta (179 aa).

This sequence belongs to the ATPase delta chain family. As to quaternary structure, F-type ATPases have 2 components, F(1) - the catalytic core - and F(0) - the membrane proton channel. F(1) has five subunits: alpha(3), beta(3), gamma(1), delta(1), epsilon(1). F(0) has three main subunits: a(1), b(2) and c(10-14). The alpha and beta chains form an alternating ring which encloses part of the gamma chain. F(1) is attached to F(0) by a central stalk formed by the gamma and epsilon chains, while a peripheral stalk is formed by the delta and b chains.

The protein localises to the cell inner membrane. Its function is as follows. F(1)F(0) ATP synthase produces ATP from ADP in the presence of a proton or sodium gradient. F-type ATPases consist of two structural domains, F(1) containing the extramembraneous catalytic core and F(0) containing the membrane proton channel, linked together by a central stalk and a peripheral stalk. During catalysis, ATP synthesis in the catalytic domain of F(1) is coupled via a rotary mechanism of the central stalk subunits to proton translocation. This protein is part of the stalk that links CF(0) to CF(1). It either transmits conformational changes from CF(0) to CF(1) or is implicated in proton conduction. The polypeptide is ATP synthase subunit delta (Thermosipho melanesiensis (strain DSM 12029 / CIP 104789 / BI429)).